The primary structure comprises 355 residues: Small ribosomal subunit protein uS2 (355 aa).

The protein belongs to the universal ribosomal protein uS2 family.

This Methylorubrum extorquens (strain CM4 / NCIMB 13688) (Methylobacterium extorquens) protein is Small ribosomal subunit protein uS2.